The following is a 360-amino-acid chain: DNA replication and repair protein RecF (360 aa).

Residue 30-37 (GANGSGKT) participates in ATP binding.

The protein belongs to the RecF family.

The protein localises to the cytoplasm. In terms of biological role, the RecF protein is involved in DNA metabolism; it is required for DNA replication and normal SOS inducibility. RecF binds preferentially to single-stranded, linear DNA. It also seems to bind ATP. This chain is DNA replication and repair protein RecF, found in Acinetobacter baumannii (strain AB307-0294).